Consider the following 80-residue polypeptide: uncharacterized protein (80 aa).

This is an uncharacterized protein from Synechococcus sp. (strain PCC 6716).